A 287-amino-acid chain; its full sequence is Toxin zeta (287 aa).

Gly-40–Thr-47 lines the ATP pocket. Residues Met-250–Ile-287 are disordered. Residues Pro-273–Ile-287 show a composition bias toward pro residues.

It belongs to the zeta toxin family. In the presence of the epsilon antitoxin, forms an inactive PezA(2)PezT(2) heterotetramer.

It catalyses the reaction UDP-N-acetyl-alpha-D-glucosamine + ATP = UDP-N-acetyl-alpha-D-glucosamine 3'-phosphate + ADP + H(+). Toxic component of a type II toxin-antitoxin (TA) system. Phosphorylates UDP-N-acetyl-D-glucosamine (UNAG) on the 3'-hydroxyl group of the N-acetyl-D-glucosamine moiety, yielding UNAG-3P. UNAG-3P inhibits MurA, the first committed step in cell wall synthesis, which is then blocked. Phosphorylation is inhibited by cognate epsilon antitoxin. Part of a postsegregational killing (PSK) system involved in the killing of plasmid-free cells. The zeta toxin induces programmed cell death. The sequence is that of Toxin zeta from Streptococcus agalactiae.